Reading from the N-terminus, the 269-residue chain is 4-hydroxy-tetrahydrodipicolinate reductase (269 aa).

NAD(+) contacts are provided by residues 8 to 13, 98 to 100, and 122 to 125; these read GVAGRM, GTT, and APNM. Histidine 156 serves as the catalytic Proton donor/acceptor. Position 157 (histidine 157) interacts with (S)-2,3,4,5-tetrahydrodipicolinate. Residue lysine 160 is the Proton donor of the active site. (S)-2,3,4,5-tetrahydrodipicolinate is bound at residue 166 to 167; that stretch reads GT.

The protein belongs to the DapB family.

The protein resides in the cytoplasm. It carries out the reaction (S)-2,3,4,5-tetrahydrodipicolinate + NAD(+) + H2O = (2S,4S)-4-hydroxy-2,3,4,5-tetrahydrodipicolinate + NADH + H(+). It catalyses the reaction (S)-2,3,4,5-tetrahydrodipicolinate + NADP(+) + H2O = (2S,4S)-4-hydroxy-2,3,4,5-tetrahydrodipicolinate + NADPH + H(+). It participates in amino-acid biosynthesis; L-lysine biosynthesis via DAP pathway; (S)-tetrahydrodipicolinate from L-aspartate: step 4/4. In terms of biological role, catalyzes the conversion of 4-hydroxy-tetrahydrodipicolinate (HTPA) to tetrahydrodipicolinate. This chain is 4-hydroxy-tetrahydrodipicolinate reductase, found in Chromohalobacter salexigens (strain ATCC BAA-138 / DSM 3043 / CIP 106854 / NCIMB 13768 / 1H11).